The following is a 554-amino-acid chain: Glucose-6-phosphate isomerase (554 aa).

E358 (proton donor) is an active-site residue. Catalysis depends on residues H389 and K515.

It belongs to the GPI family.

The protein resides in the cytoplasm. It catalyses the reaction alpha-D-glucose 6-phosphate = beta-D-fructose 6-phosphate. The protein operates within carbohydrate biosynthesis; gluconeogenesis. It participates in carbohydrate degradation; glycolysis; D-glyceraldehyde 3-phosphate and glycerone phosphate from D-glucose: step 2/4. In terms of biological role, catalyzes the reversible isomerization of glucose-6-phosphate to fructose-6-phosphate. The sequence is that of Glucose-6-phosphate isomerase from Mycobacterium leprae (strain Br4923).